Reading from the N-terminus, the 115-residue chain is MSDDEELEKIRRRQMEELQRQAMQRQMAEEEEKQREIEKARRQQILRQILDPSARERLNNVRLVRPDLADNVENQLIQLASMGRINRIIKESDIIDILSKLTENKREPKIERRSK.

The tract at residues 18 to 37 (LQRQAMQRQMAEEEEKQREI) is disordered.

Belongs to the PDCD5 family.

The chain is DNA-binding protein TV0008 from Thermoplasma volcanium (strain ATCC 51530 / DSM 4299 / JCM 9571 / NBRC 15438 / GSS1).